A 475-amino-acid polypeptide reads, in one-letter code: Lipoprotein lipase (475 aa).

Residues 1–27 form the signal peptide; sequence MESKALLLVALGMWFQSLTATRGGVAA. The interaction with GPIHBP1 stretch occupies residues 32 to 53; sequence GDFIDIESKFALRTPEDTAEDT. Residues cysteine 54 and cysteine 67 are joined by a disulfide bond. Asparagine 70 is a glycosylation site (N-linked (GlcNAc...) asparagine). Tyrosine 121 carries the 3'-nitrotyrosine modification. Serine 159 (nucleophile) is an active-site residue. The active-site Charge relay system is the aspartate 183. Tyrosine 191 is subject to 3'-nitrotyrosine. Alanine 194, arginine 197, serine 199, and aspartate 202 together coordinate Ca(2+). A disulfide bond links cysteine 243 and cysteine 266. Histidine 268 serves as the catalytic Charge relay system. Intrachain disulfides connect cysteine 291-cysteine 310 and cysteine 302-cysteine 305. Positions 341–464 constitute a PLAT domain; sequence FHYQVKIHFS…KGKASVVFVK (124 aa). The residue at position 343 (tyrosine 343) is a 3'-nitrotyrosine. A glycan (N-linked (GlcNAc...) asparagine) is linked at asparagine 386. The interval 417–421 is important for interaction with lipoprotein particles; the sequence is WSDWW. An important for heparin binding region spans residues 430–434; it reads KIRVK. Residues 443-467 are interaction with GPIHBP1; that stretch reads IFCSREKVSHLQKGKASVVFVKCHD. Cysteines 445 and 465 form a disulfide.

Belongs to the AB hydrolase superfamily. Lipase family. In terms of assembly, homodimer. Interacts with GPIHBP1 with 1:1 stoichiometry. Interacts with APOC2; the interaction activates LPL activity in the presence of lipids. Interaction with heparan sulfate proteoglycans is required to protect LPL against loss of activity. Associates with lipoprotein particles in blood plasma. Interacts with LMF1 and SEL1L; interaction with SEL1L is required to prevent aggregation of newly synthesized LPL in the endoplasmic reticulum (ER), and for normal export of LPL from the ER to the extracellular space. Interacts with SORL1; SORL1 acts as a sorting receptor, promoting LPL localization to endosomes and later to lysosomes, leading to degradation of newly synthesized LPL. In terms of processing, tyrosine nitration after lipopolysaccharide (LPS) challenge down-regulates the lipase activity.

The protein resides in the cell membrane. It localises to the secreted. It is found in the extracellular space. The protein localises to the extracellular matrix. It carries out the reaction a triacylglycerol + H2O = a diacylglycerol + a fatty acid + H(+). With respect to regulation, the apolipoprotein APOC2 acts as a coactivator of LPL activity. Ca(2+) binding promotes protein stability and formation of the active homodimer. Interaction with GPIHBP1 protects LPL against inactivation by ANGPTL4. Key enzyme in triglyceride metabolism. Catalyzes the hydrolysis of triglycerides from circulating chylomicrons and very low density lipoproteins (VLDL), and thereby plays an important role in lipid clearance from the blood stream, lipid utilization and storage. Mediates margination of triglyceride-rich lipoprotein particles in capillaries. Recruited to its site of action on the luminal surface of vascular endothelium by binding to GPIHBP1 and cell surface heparan sulfate proteoglycans. This Neovison vison (American mink) protein is Lipoprotein lipase (LPL).